Reading from the N-terminus, the 132-residue chain is ATP synthase epsilon chain (132 aa).

Belongs to the ATPase epsilon chain family. F-type ATPases have 2 components, CF(1) - the catalytic core - and CF(0) - the membrane proton channel. CF(1) has five subunits: alpha(3), beta(3), gamma(1), delta(1), epsilon(1). CF(0) has three main subunits: a, b and c.

It is found in the cell membrane. Functionally, produces ATP from ADP in the presence of a proton gradient across the membrane. The polypeptide is ATP synthase epsilon chain (Brevibacillus brevis (strain 47 / JCM 6285 / NBRC 100599)).